Reading from the N-terminus, the 538-residue chain is Lipid scramblase CLPTM1L (538 aa).

The Cytoplasmic portion of the chain corresponds to 1–10 (MWSGRSSFTS). A helical membrane pass occupies residues 11–31 (LVVGVFVVYVVHTCWVMYGIV). Residues 32–284 (YTRPCSGDAN…VKGIFVDTNL (253 aa)) are Extracellular-facing. N-linked (GlcNAc...) asparagine glycans are attached at residues asparagine 91 and asparagine 101. The helical transmembrane segment at 285–305 (YFLALTFFVAAFHLLFDFLAF) threads the bilayer. The Cytoplasmic segment spans residues 306-324 (KNDISFWKKKKSMIGMSTK). Residues 325–342 (AVLWRCFSTVVIFLFLLD) traverse the membrane as a helical segment. Over 343-346 (EQTS) the chain is Extracellular. A helical membrane pass occupies residues 347-364 (LLVLVPAGVGAAIELWKV). Residues 365–402 (KKALKMTILWRGLMPEFELGTYSESERKTEEYDTQAMK) lie on the Cytoplasmic side of the membrane. The helical transmembrane segment at 403-423 (YLSYLLYPLCVGGAVYSLLNI) threads the bilayer. At 424-428 (KYKSW) the chain is on the extracellular side. Residues 429–449 (YSWLINSFVNGVYAFGFLFML) form a helical membrane-spanning segment. The Cytoplasmic portion of the chain corresponds to 450–538 (PQLFVNYKLK…EKAARAPHTD (89 aa)).

Belongs to the CLPTM1 family.

The protein localises to the endoplasmic reticulum membrane. It catalyses the reaction a 6-(alpha-D-glucosaminyl)-1-(1,2-diacyl-sn-glycero-3-phospho)-1D-myo-inositol(in) = a 6-(alpha-D-glucosaminyl)-1-(1,2-diacyl-sn-glycero-3-phospho)-1D-myo-inositol(out). The catalysed reaction is 6-(alpha-D-glucosaminyl)-(1-octadecanoyl,2-(9Z)-octadecenoyl-sn-glycero-3-phospho)-1D-myo-inositol(in) = 6-(alpha-D-glucosaminyl)-(1-octadecanoyl,2-(9Z)-octadecenoyl-sn-glycero-3-phospho)-1D-myo-inositol(out). The enzyme catalyses a 1,2-diacyl-sn-glycero-3-phospho-(1D-myo-inositol)(in) = a 1,2-diacyl-sn-glycero-3-phospho-(1D-myo-inositol)(out). It carries out the reaction a 1,2-diacyl-sn-glycero-3-phosphocholine(in) = a 1,2-diacyl-sn-glycero-3-phosphocholine(out). It catalyses the reaction a 1,2-diacyl-sn-glycero-3-phosphoethanolamine(in) = a 1,2-diacyl-sn-glycero-3-phosphoethanolamine(out). In terms of biological role, scramblase that mediates the translocation of glucosaminylphosphatidylinositol (alpha-D-GlcN-(1-6)-(1,2-diacyl-sn-glycero-3-phospho)-1D-myo-inositol, GlcN-PI) across the endoplasmic reticulum (ER) membrane, from the cytosolic leaflet to the luminal leaflet of the ER membrane, where it participates in the biosynthesis of glycosylphosphatidylinositol (GPI). GPI is a lipid glycoconjugate involved in post-translational modification of proteins. Can also translocate 1,2-diacyl-sn-glycero-3-phospho-(1D-myo-inositol) (phosphatidylinositol or PI), as well as several other phospholipids (1,2-diacyl-sn-glycero-3-phosphocholine, 1,2-diacyl-sn-glycero-3-phosphoethanolamine), and N-acetylglucosaminylphosphatidylinositol (GlcNAc-PI) in vitro. In Pongo abelii (Sumatran orangutan), this protein is Lipid scramblase CLPTM1L (CLPTM1L).